Here is a 406-residue protein sequence, read N- to C-terminus: Imidazolonepropionase (406 aa).

Fe(3+) contacts are provided by histidine 67 and histidine 69. Zn(2+) contacts are provided by histidine 67 and histidine 69. Residues arginine 76, tyrosine 139, and histidine 172 each coordinate 4-imidazolone-5-propanoate. Residue tyrosine 139 coordinates N-formimidoyl-L-glutamate. Histidine 237 is a binding site for Fe(3+). Histidine 237 provides a ligand contact to Zn(2+). Residue glutamine 240 coordinates 4-imidazolone-5-propanoate. Aspartate 312 lines the Fe(3+) pocket. Residue aspartate 312 coordinates Zn(2+). 2 residues coordinate N-formimidoyl-L-glutamate: asparagine 314 and glycine 316. Threonine 317 is a binding site for 4-imidazolone-5-propanoate.

The protein belongs to the metallo-dependent hydrolases superfamily. HutI family. Zn(2+) serves as cofactor. It depends on Fe(3+) as a cofactor.

The protein localises to the cytoplasm. It carries out the reaction 4-imidazolone-5-propanoate + H2O = N-formimidoyl-L-glutamate. Its pathway is amino-acid degradation; L-histidine degradation into L-glutamate; N-formimidoyl-L-glutamate from L-histidine: step 3/3. Its function is as follows. Catalyzes the hydrolytic cleavage of the carbon-nitrogen bond in imidazolone-5-propanoate to yield N-formimidoyl-L-glutamate. It is the third step in the universal histidine degradation pathway. This chain is Imidazolonepropionase, found in Paraburkholderia phymatum (strain DSM 17167 / CIP 108236 / LMG 21445 / STM815) (Burkholderia phymatum).